Consider the following 322-residue polypeptide: N-acetyl-gamma-glutamyl-phosphate reductase (322 aa).

The active site involves Cys132.

The protein belongs to the NAGSA dehydrogenase family. Type 1 subfamily.

The protein resides in the cytoplasm. It catalyses the reaction N-acetyl-L-glutamate 5-semialdehyde + phosphate + NADP(+) = N-acetyl-L-glutamyl 5-phosphate + NADPH + H(+). The protein operates within amino-acid biosynthesis; L-arginine biosynthesis; N(2)-acetyl-L-ornithine from L-glutamate: step 3/4. Catalyzes the NADPH-dependent reduction of N-acetyl-5-glutamyl phosphate to yield N-acetyl-L-glutamate 5-semialdehyde. This is N-acetyl-gamma-glutamyl-phosphate reductase from Bacteroides fragilis (strain YCH46).